The sequence spans 574 residues: Ankyrin repeat protein B18 (574 aa).

ANK repeat units lie at residues 56–87 (TGYT…DVTI), 135–164 (IKSR…DPNF), 167–213 (DGYT…NLNA), 217–249 (CGNT…NFEI), 253–285 (HGLT…NVGE), and 327–356 (EGKT…DINA). The 34-residue stretch at 541 to 574 (KCLLTLLPSEIIYEILYMLTIYDLYNISYPPTKV) folds into the F-box domain.

In Variola virus (isolate Human/India/Ind3/1967) (VARV), this protein is Ankyrin repeat protein B18.